A 320-amino-acid polypeptide reads, in one-letter code: 3-ketodihydrosphingosine reductase TSC10 (320 aa).

At 1 to 254 the chain is on the cytoplasmic side; the sequence is MKFTLEDQVV…IIAKSLARGD (254 aa). An NADP(+)-binding site is contributed by L11. Residues G14, S16, and G18 each coordinate NADPH. The GXSXG motif lies at 14 to 18; the sequence is GGSQG. L19 lines the NADP(+) pocket. Positions 41, 45, 89, and 90 each coordinate NADPH. D89 lines the NADP(+) pocket. S166 (proton donor) is an active-site residue. Residues Y180, K184, and S213 each contribute to the NADP(+) site. Y180 acts as the Proton acceptor in catalysis. The active-site Lowers pKa of active site Tyr is K184. A helical membrane pass occupies residues 255 to 275; that stretch reads DDVFTDFVGWMIMGMDLGLTA. At 276 to 279 the chain is on the lumenal side; sequence KKSR. The chain crosses the membrane as a helical span at residues 280 to 300; the sequence is FVPLQWIFGVLSNILVVPFYM. Residues 301-320 are Cytoplasmic-facing; that stretch reads VGCSWYIRKWFRENDGKKAN.

It belongs to the short-chain dehydrogenases/reductases (SDR) family. As to quaternary structure, dimer or tetramer.

The protein resides in the endoplasmic reticulum membrane. The catalysed reaction is sphinganine + NADP(+) = 3-oxosphinganine + NADPH + H(+). Its pathway is lipid metabolism; sphingolipid metabolism. In terms of biological role, catalyzes the reduction of 3'-oxosphinganine (3-ketodihydrosphingosine/KDS) to sphinganine (dihydrosphingosine/DHS), the second step of de novo sphingolipid biosynthesis. The chain is 3-ketodihydrosphingosine reductase TSC10 from Saccharomyces cerevisiae (strain ATCC 204508 / S288c) (Baker's yeast).